Reading from the N-terminus, the 442-residue chain is Protein phosphatase 2C 3 (442 aa).

The segment at 30-100 is disordered; sequence RFRMSPSEMN…VSISDGNSSV (71 aa). A compositionally biased stretch (acidic residues) spans 79 to 90; the sequence is PEEESVSLEDSD. The region spanning 120–433 is the PPM-type phosphatase domain; sequence RYGVASVCGR…DNVSVVVIDL (314 aa). The Mn(2+) site is built by aspartate 162, glycine 163, and aspartate 339. The tract at residues 363–401 is disordered; it reads GRGRRRGETQTPGRRSEEEGKEEEEKVVGSRKNGKRGEI. The segment covering 376–390 has biased composition (basic and acidic residues); sequence RRSEEEGKEEEEKVV. Aspartate 424 is a binding site for Mn(2+).

It belongs to the PP2C family. In terms of assembly, part of a K(+)-channel calcium-sensing kinase/phosphatase complex composed by a calcium sensor CBL (CBL1, CBL2, CBL3 or CBL9), a kinase CIPK (CIPK6, CIPK16 or CIPK23), a phosphatase PP2C (AIP1) and a K(+)-channel (AKT1). Interacts with AKT1 and CIPK23. Interacts with PYL8/RCAR3 in an abscisic acid-independent. Interacts with PYR1/RCAR11 in an abscisic acid-dependent manner. Mg(2+) serves as cofactor. It depends on Mn(2+) as a cofactor. As to expression, expressed in shoot meristem, vascular tissues of cotyledons, and in primary roots surrounding the root meristem. Highly expressed in seeds.

Its subcellular location is the cell membrane. It is found in the cytoplasm. The protein localises to the nucleus. It catalyses the reaction O-phospho-L-seryl-[protein] + H2O = L-seryl-[protein] + phosphate. The catalysed reaction is O-phospho-L-threonyl-[protein] + H2O = L-threonyl-[protein] + phosphate. In terms of biological role, involved in the negative regulation of the K(+) potassium channel AKT1 by its dephosphorylation, antagonistically to CIPK proteins (e.g. CIPK23). Functions as a positive regulator of abscisic acid-mediated cell signaling during seedling growth. Involved in the regulation of seed dormancy. Acts as a negative regulator of seed dormancy by inhibiting abscisic signaling and subsequently activating gibberellic acid signaling. The polypeptide is Protein phosphatase 2C 3 (Arabidopsis thaliana (Mouse-ear cress)).